We begin with the raw amino-acid sequence, 132 residues long: Phosphoribosyl-AMP cyclohydrolase (132 aa).

D82 is a Mg(2+) binding site. A Zn(2+)-binding site is contributed by C83. Residues D84 and D86 each coordinate Mg(2+). Zn(2+)-binding residues include C99 and C106.

It belongs to the PRA-CH family. In terms of assembly, homodimer. Requires Mg(2+) as cofactor. It depends on Zn(2+) as a cofactor.

The protein resides in the cytoplasm. The catalysed reaction is 1-(5-phospho-beta-D-ribosyl)-5'-AMP + H2O = 1-(5-phospho-beta-D-ribosyl)-5-[(5-phospho-beta-D-ribosylamino)methylideneamino]imidazole-4-carboxamide. Its pathway is amino-acid biosynthesis; L-histidine biosynthesis; L-histidine from 5-phospho-alpha-D-ribose 1-diphosphate: step 3/9. In terms of biological role, catalyzes the hydrolysis of the adenine ring of phosphoribosyl-AMP. The polypeptide is Phosphoribosyl-AMP cyclohydrolase (Paramagnetospirillum magneticum (strain ATCC 700264 / AMB-1) (Magnetospirillum magneticum)).